We begin with the raw amino-acid sequence, 414 residues long: MMLGVIADDFTGASDIASFLVENGLSAVQMNGVPKQPLNSRVDAIVISLKSRSNPANEAVEQSLNAYNWLQENGCTQFYFKYCSTFDSTAKGNIGPVTDALLEALNEDFTVITPALPVNGRTIFNGYLFVGEQLLSESGMKNHPITPMTDANLMRLMDAQAKGKTGLVAYADVIQGAARVKERFAELKAQGYRYAVVDAADNSQLEVLAEAVAGLKLVTGGSGLGAYIAARLSGGKKGTNAFTPTKGKTVVLSGSCSVMTNKQVEKYCEKAPHFQLDAAQAINNPNYAEELYQWVTANLDAPLAPMVYATVPPEALKAIQNEFGADKASHAIENTFAQLAAKLKRYGVTNFINAGGETSSIVVQQLGFSGFHIGKQIAPGVPWLKAVEEDIYLALKSGNFGKEDFFEYAQGMFV.

ATP-binding positions include Ser-255, 355-358, and Gly-398; that span reads GGET.

Belongs to the four-carbon acid sugar kinase family.

The enzyme catalyses 3-dehydro-L-erythronate + ATP = 3-dehydro-4-O-phospho-L-erythronate + ADP + H(+). It carries out the reaction 3-dehydro-D-erythronate + ATP = 3-dehydro-4-O-phospho-D-erythronate + ADP + H(+). Functionally, catalyzes the ATP-dependent phosphorylation of 3-oxo-tetronate to 3-oxo-tetronate 4-phosphate. This is 3-oxo-tetronate kinase from Actinobacillus succinogenes (strain ATCC 55618 / DSM 22257 / CCUG 43843 / 130Z).